The chain runs to 905 residues: MSAKLLYNLSDENPNLNKQFGCMNGIFQVFYRQHCPATPVTVSGGAEKSLPPGERRGSVGETNMESDKETERSSTKKKKSAAKEKHRVSFESSSRPSFSSSPRSSSFSSAEVSTTASQFDQPGENLIREQPNGGLMMPYDLKELVKGSINREIRTRGEEASFTQQQQPISARSSMLLLKESSLRSPCRSSNEWNEGRGAAMKFKESHRLSYDEREMRNNGFRVGSKLKETPRLSLDSRSNSFRSPRADAARSSCPEEPATMTHRRSSSSVVAKLMGLEVIADNSDTEQRRENRFCDSPRPMSRVEPTALQRSRSVDSIKRIPASAASKFPMEPAPWKQMKAGDSALTVYGEIQKRLTQLEFKKSGKDLRALKQILEAMEKTQQLIDESRDDGTLSTTTLMQRTHKPVSAATSPARNFKSSSIVVMKSAAPVSTSPLPQNVTLPNVKVGNSRQTRKVTSGKQNAMDLTPRPGLYKGQLDSTKSNSPKTVRSRQALAADAGSMTKSGRSQQHSVSPRTQPKKLGFEKQTRPTTPKSEPGKRQLGRQQTEVASPRRKQMIKPHSTLQQPDDRLSDARSDLRSLRSDSNISLGSNVDIEVTSRHRLERNCDFPEQHTPKQRSPDFGIKQDRPSLKPLKVTVEQPSPVSVLDAVFDEEDSPSPVRKISLSFKEEDALRSEESEWINKPTSFCRSVPFPQSNRGPMKPSSDHFECSPEEGADFKSGNHKYILEILLASGILRDLEYSMISFQLHQTRLPINPGLFFILEQNKASNVTLPDNKHRGRGFRQQQTNPTETIRRKLVFDTVNEILARKFTAEGCIKPRLIANPLKKLEKISKEEQLLQTLCSEIDRLQQNNSNCILEDDEEDIIWEDLQSQSMNLKEFEGETPGIVLDIERMIFRDLVNEVCFC.

Disordered stretches follow at residues 42 to 136 (VSGG…GGLM), 232 to 268 (RLSL…RSSS), 285 to 315 (DTEQ…SRSV), 432 to 585 (STSP…SDSN), 606 to 626 (CDFP…IKQD), and 690 to 711 (VPFP…ECSP). The span at 65–74 (ESDKETERSS) shows a compositional bias: basic and acidic residues. Residues 90–117 (FESSSRPSFSSSPRSSSFSSAEVSTTAS) are compositionally biased toward low complexity. Positions 286–296 (TEQRRENRFCD) are enriched in basic and acidic residues. 3 stretches are compositionally biased toward polar residues: residues 432–461 (STSP…SGKQ), 477–487 (LDSTKSNSPKT), and 501–516 (MTKS…SPRT). Over residues 566 to 581 (PDDRLSDARSDLRSLR) the composition is skewed to basic and acidic residues.

In terms of assembly, interacts (via C-terminus) with TON1A and TON1B.

It is found in the cytoplasm. Its subcellular location is the cytoskeleton. Its function is as follows. In association with LNG1, regulates leaf morphology by promoting longitudinal polar cell elongation independently of ROT3. Associates with microtubules and recruits TON1A and TON1B to the cytoskeleton through its C-terminus. The polypeptide is Protein LONGIFOLIA 2 (LNG2) (Arabidopsis thaliana (Mouse-ear cress)).